The following is a 362-amino-acid chain: Patr class I histocompatibility antigen, B-2 alpha chain (362 aa).

A signal peptide spans 1 to 24; the sequence is MQVTAPRTVLLLLSAALALTETWA. Residues 25–114 are alpha-1; it reads GSHSMKYFYT…LRGYYNQSEA (90 aa). Over 25–308 the chain is Extracellular; sequence GSHSMKYFYT…EPSSQSTIPI (284 aa). A glycan (N-linked (GlcNAc...) asparagine) is linked at Asn-110. Residues 115–206 form an alpha-2 region; the sequence is GSHIIQRMYG…ENGKETLQRA (92 aa). Cystine bridges form between Cys-125/Cys-188 and Cys-227/Cys-283. Residues 207 to 298 are alpha-3; it reads DPPKTHVTHH…GLPKPLTLRW (92 aa). The Ig-like C1-type domain occupies 209 to 295; the sequence is PKTHVTHHPI…QHEGLPKPLT (87 aa). The connecting peptide stretch occupies residues 299–308; the sequence is EPSSQSTIPI. Residues 309 to 332 form a helical membrane-spanning segment; sequence VGIVAGLAVLAVVVIGAVVAAVMC. The Cytoplasmic segment spans residues 333 to 362; that stretch reads RRKSSGGKGGSYSQAASSDSAQGSDVSLTA. The segment at 336–362 is disordered; it reads SSGGKGGSYSQAASSDSAQGSDVSLTA. Residues 343 to 362 show a composition bias toward low complexity; that stretch reads SYSQAASSDSAQGSDVSLTA.

The protein belongs to the MHC class I family. In terms of assembly, heterodimer of an alpha chain and a beta chain (beta-2-microglobulin).

It localises to the membrane. In terms of biological role, involved in the presentation of foreign antigens to the immune system. This is Patr class I histocompatibility antigen, B-2 alpha chain from Pan troglodytes (Chimpanzee).